Here is a 406-residue protein sequence, read N- to C-terminus: Succinylornithine transaminase (406 aa).

Position 252 is an N6-(pyridoxal phosphate)lysine (Lys252).

The protein belongs to the class-III pyridoxal-phosphate-dependent aminotransferase family. AstC subfamily. It depends on pyridoxal 5'-phosphate as a cofactor.

It carries out the reaction N(2)-succinyl-L-ornithine + 2-oxoglutarate = N-succinyl-L-glutamate 5-semialdehyde + L-glutamate. Its pathway is amino-acid degradation; L-arginine degradation via AST pathway; L-glutamate and succinate from L-arginine: step 3/5. Catalyzes the transamination of N(2)-succinylornithine and alpha-ketoglutarate into N(2)-succinylglutamate semialdehyde and glutamate. Can also act as an acetylornithine aminotransferase. The sequence is that of Succinylornithine transaminase from Escherichia coli O17:K52:H18 (strain UMN026 / ExPEC).